Reading from the N-terminus, the 190-residue chain is Ladderlectin (190 aa).

A signal peptide spans 1–18 (MAMLTISLLLCAAVALNG). The C-type lectin domain occupies 60-179 (GSRCFMFVET…GNSFPSGVLQ (120 aa)). C153 and C169 form a disulfide bridge.

Multimeric. Expressed in cells of the branchial epithelium, hepatic sinusoids, biliary epithelium, renal interstitium, skin, and sub-mucosal granular layer of the intestine. Highly expressed in caudal kidney. Moderately expressed in liver. Weakly expressed in gill, spleen, cranial kidney and skin. Isoform 1 is highly expressed in intestine. Isoform 2 is weakly expressed in intestine.

Its function is as follows. Lectin that binds sepharose in a calcium-dependent manner. This Oncorhynchus mykiss (Rainbow trout) protein is Ladderlectin.